Reading from the N-terminus, the 85-residue chain is Small ribosomal subunit protein uS17 (85 aa).

This sequence belongs to the universal ribosomal protein uS17 family. Part of the 30S ribosomal subunit.

Its function is as follows. One of the primary rRNA binding proteins, it binds specifically to the 5'-end of 16S ribosomal RNA. This Syntrophus aciditrophicus (strain SB) protein is Small ribosomal subunit protein uS17.